We begin with the raw amino-acid sequence, 466 residues long: MPQTLSASDMVTPGSLSPPTTEPTDGEQAGQPLLDGAPSSASLETLIQHLVPTADYYPEKAYIFTFLLSSRLFIEPRELLARVCHLCIEQQQLDKPVLDKARVRKFGPKLLQLLAEWTETFPRDFQEESTIGQLKDVVGRIAPCDETYRKRMHQLLQALHQKLAALRQGPEGLVSADKPISYRTKPPASIHRELLGVCSDPYTLAQQLTHVELERLRHIGPEEFVQAFVNKDPLASTKPCFSDKTSHLEAYVKWFNRLCYLVATEICMPAKKKQRAQVIEFFIDVARECFNIGNFNSLMAIISGMNMSPVSRLKKTWAKVKTAKFFILEHQMDPTGNFCNYRTALRGAAHRSLTAHSSREKIVIPFFSLLIKDIYFLNEGCANRLPNGHVNFEKFLELAKQVGEFITWKQVECPFEQDPSITHYLSTAPIFSEDGLYLASYESESPENQTEKERWKSLRSSILGKT.

Residues 1–23 (MPQTLSASDMVTPGSLSPPTTEP) show a composition bias toward polar residues. Disordered stretches follow at residues 1 to 35 (MPQTLSASDMVTPGSLSPPTTEPTDGEQAGQPLLD) and 443 to 466 (SESPENQTEKERWKSLRSSILGKT). In terms of domain architecture, N-terminal Ras-GEF spans 34–164 (LDGAPSSASL…LLQALHQKLA (131 aa)). The Ras-GEF domain maps to 200–446 (DPYTLAQQLT…YLASYESESP (247 aa)).

Functionally, guanine nucleotide exchange factor (GEF). The chain is Ras-GEF domain-containing family member 1C (RASGEF1C) from Macaca fascicularis (Crab-eating macaque).